The sequence spans 177 residues: Adenine phosphoribosyltransferase (177 aa).

Belongs to the purine/pyrimidine phosphoribosyltransferase family. Homodimer.

The protein localises to the cytoplasm. The catalysed reaction is AMP + diphosphate = 5-phospho-alpha-D-ribose 1-diphosphate + adenine. It functions in the pathway purine metabolism; AMP biosynthesis via salvage pathway; AMP from adenine: step 1/1. Its function is as follows. Catalyzes a salvage reaction resulting in the formation of AMP, that is energically less costly than de novo synthesis. The polypeptide is Adenine phosphoribosyltransferase (Prosthecochloris aestuarii (strain DSM 271 / SK 413)).